The following is a 182-amino-acid chain: Regulatory protein RecX (182 aa).

The disordered stretch occupies residues 12–54; the sequence is LSQRDHSESELRRKLAAPPFSAKGNWGKRSGAKSSNLVESNPV. Basic and acidic residues predominate over residues 13-24; the sequence is SQRDHSESELRR. A compositionally biased stretch (polar residues) spans 43 to 54; that stretch reads AKSSNLVESNPV.

The protein belongs to the RecX family.

Its subcellular location is the cytoplasm. Modulates RecA activity. The sequence is that of Regulatory protein RecX from Yersinia pseudotuberculosis serotype I (strain IP32953).